A 999-amino-acid polypeptide reads, in one-letter code: Receptor-like protein kinase 5 (999 aa).

The first 14 residues, 1–14 (MLYCLILLLCLSST), serve as a signal peptide directing secretion. Topologically, residues 15–621 (YLPSLSLNQD…LCRKITRSKN (607 aa)) are extracellular. 5 LRR repeats span residues 90 to 112 (SLHS…DFDT), 115 to 137 (NLIS…LPFN), 140 to 161 (NLKF…SFGE), 164 to 186 (KLES…LGNV), and 188 to 208 (TLKE…PSQL). N-linked (GlcNAc...) asparagine glycosylation is found at Asn98 and Asn102. N-linked (GlcNAc...) asparagine glycosylation is found at Asn150 and Asn185. N-linked (GlcNAc...) asparagine glycosylation is present at Asn210. LRR repeat units follow at residues 213 to 236 (ELQV…SRLT) and 237 to 259 (SLVN…ITQL). Asn269 and Asn282 each carry an N-linked (GlcNAc...) asparagine glycan. LRR repeat units follow at residues 285–307 (TLKR…LNLL), 308–330 (NLES…ITRS), 332–353 (TLSE…QLGA), 356–378 (PLQY…VCGE), 380–402 (KLEY…LGKC), 404–427 (SLTR…WGLP), 428–450 (RLSL…IIGA), 452–474 (NLSN…IGSL), 500–523 (QLSR…RGWK), 524–546 (NLNE…VGIL), 548–569 (VLNY…ELQN), and 571–593 (KLNV…YANK). An N-linked (GlcNAc...) asparagine glycan is attached at Asn452. N-linked (GlcNAc...) asparagine glycosylation occurs at Asn576. Residues 622–641 (IGYVWILLTIFLLAGLVFVV) traverse the membrane as a helical segment. The Cytoplasmic portion of the chain corresponds to 642–999 (GIVMFIAKCR…PYYTEDLNSV (358 aa)). Residues 683 to 968 (LDEKNVIGFG…KVVIMLQEVS (286 aa)) form the Protein kinase domain. Residues 689–697 (IGFGSSGKV) and Lys711 each bind ATP. Phosphotyrosine occurs at positions 766 and 806. Residue Asp819 is the Proton acceptor of the active site. At Ser856 the chain carries Phosphoserine. Tyr864 and Tyr871 each carry phosphotyrosine. Thr872 carries the post-translational modification Phosphothreonine. Residues 972 to 999 (PCSSPNTSKRSKTGGKLSPYYTEDLNSV) form a disordered region.

This sequence belongs to the protein kinase superfamily. Ser/Thr protein kinase family. In terms of assembly, interacts with CST. Binds to IDA. The cofactor is Mg(2+). Mn(2+) is required as a cofactor. In terms of processing, autophosphorylated on Ser, Thr and Tyr residues. As to expression, expressed in roots and rosettes. Expressed at the base of petioles and pedicels, and in the abscission zones of the floral organs.

The protein resides in the cell membrane. It catalyses the reaction L-seryl-[protein] + ATP = O-phospho-L-seryl-[protein] + ADP + H(+). The catalysed reaction is L-threonyl-[protein] + ATP = O-phospho-L-threonyl-[protein] + ADP + H(+). It carries out the reaction L-tyrosyl-[protein] + ATP = O-phospho-L-tyrosyl-[protein] + ADP + H(+). Its function is as follows. Receptor with a dual specificity kinase activity acting on both serine/threonine- and tyrosine-containing substrates that controls floral organ abscission. May interact with the 'INFLORESCENCE DEFICIENT IN ABSCISSION' (IDA) ligands family. The protein is Receptor-like protein kinase 5 (RLK5) of Arabidopsis thaliana (Mouse-ear cress).